We begin with the raw amino-acid sequence, 413 residues long: Variant surface glycoprotein YnAT 1.3 (413 aa).

An N-terminal signal peptide occupies residues 1–22 (MLDNSRARSIVHLLILLKAHVI). N-linked (GlcNAc...) asparagine glycans are attached at residues asparagine 91, asparagine 361, and asparagine 379. Residue asparagine 379 is the site of GPI-anchor amidated asparagine attachment. Positions 380–413 (SSNPTSRQNSVVQEPTTVSAAAITPLILPWTLLI) are cleaved as a propeptide — removed in mature form.

It localises to the cell membrane. VSG forms a coat on the surface of the parasite. The trypanosome evades the immune response of the host by expressing a series of antigenically distinct VSGs from an estimated 1000 VSG genes. The protein is Variant surface glycoprotein YnAT 1.3 of Trypanosoma congolense.